The primary structure comprises 233 residues: 2-C-methyl-D-erythritol 4-phosphate cytidylyltransferase (233 aa).

The protein belongs to the IspD/TarI cytidylyltransferase family. IspD subfamily.

It carries out the reaction 2-C-methyl-D-erythritol 4-phosphate + CTP + H(+) = 4-CDP-2-C-methyl-D-erythritol + diphosphate. Its pathway is isoprenoid biosynthesis; isopentenyl diphosphate biosynthesis via DXP pathway; isopentenyl diphosphate from 1-deoxy-D-xylulose 5-phosphate: step 2/6. Catalyzes the formation of 4-diphosphocytidyl-2-C-methyl-D-erythritol from CTP and 2-C-methyl-D-erythritol 4-phosphate (MEP). The polypeptide is 2-C-methyl-D-erythritol 4-phosphate cytidylyltransferase (Syntrophotalea carbinolica (strain DSM 2380 / NBRC 103641 / GraBd1) (Pelobacter carbinolicus)).